We begin with the raw amino-acid sequence, 206 residues long: Small ribosomal subunit protein uS4 (206 aa).

The S4 RNA-binding domain occupies 96–156 (GRLDNVVYRM…EKSKKQARIK (61 aa)).

It belongs to the universal ribosomal protein uS4 family. Part of the 30S ribosomal subunit. Contacts protein S5. The interaction surface between S4 and S5 is involved in control of translational fidelity.

Its function is as follows. One of the primary rRNA binding proteins, it binds directly to 16S rRNA where it nucleates assembly of the body of the 30S subunit. With S5 and S12 plays an important role in translational accuracy. The sequence is that of Small ribosomal subunit protein uS4 from Histophilus somni (strain 2336) (Haemophilus somnus).